We begin with the raw amino-acid sequence, 404 residues long: MKRTIIMMLDSFGVGASADAASFGDVGSDTFGHIAKACAEGKADIGREGPLKLPNLARLGLGHAAMESTGAFAPGFGDNVELIGAYGHAQELSSGKDTPSGHWEMAGVPVLFEWGYFSEHQNSFPKELTDKILARAGLDGFLGNCHASGTTILEELGEEHMRSGKPIFYTSADSVFQIACHEETFGLDNLYRLCEITREELEPYNIGRVIARPFDGTGPSDFARTGNRKDYSLEPPAKTVLDKLKEAGGEVVSVGKIADIYAYCGITKKVKANGLEALFDATLAEVKSAGDNTIVFTNFVDFDSHYGHRRDVAGYAKGLEYFDARLPEMLALLGEDDLLILTADHGCDPTWQGTDHTREYVPVLAFGAGLKAGSLGRRKSFADIGQSIASHFKLEPMAYGESFL.

6 residues coordinate Mn(2+): aspartate 10, aspartate 303, histidine 308, aspartate 344, histidine 345, and histidine 356.

This sequence belongs to the phosphopentomutase family. The cofactor is Mn(2+).

It is found in the cytoplasm. It catalyses the reaction 2-deoxy-alpha-D-ribose 1-phosphate = 2-deoxy-D-ribose 5-phosphate. The catalysed reaction is alpha-D-ribose 1-phosphate = D-ribose 5-phosphate. It functions in the pathway carbohydrate degradation; 2-deoxy-D-ribose 1-phosphate degradation; D-glyceraldehyde 3-phosphate and acetaldehyde from 2-deoxy-alpha-D-ribose 1-phosphate: step 1/2. Functionally, isomerase that catalyzes the conversion of deoxy-ribose 1-phosphate (dRib-1-P) and ribose 1-phosphate (Rib-1-P) to deoxy-ribose 5-phosphate (dRib-5-P) and ribose 5-phosphate (Rib-5-P), respectively. The chain is Phosphopentomutase from Shewanella baltica (strain OS185).